The sequence spans 327 residues: Regulatory protein MsrR (327 aa).

A compositionally biased stretch (basic and acidic residues) spans 1-18 (MDKETNDNEYRRQSEHRT). The tract at residues 1–24 (MDKETNDNEYRRQSEHRTSAPKRK) is disordered. Residues 1 to 31 (MDKETNDNEYRRQSEHRTSAPKRKKKKKIRK) lie on the Cytoplasmic side of the membrane. A helical; Signal-anchor for type II membrane protein membrane pass occupies residues 32–52 (LPIILLIVVILLIALVVYIVH). Residues 53 to 327 (SYNSGVEYAK…QAIKDFLDED (275 aa)) lie on the Extracellular side of the membrane.

Belongs to the LytR/CpsA/Psr (LCP) family.

It is found in the cell membrane. In terms of biological role, involved in SarA attenuation. Affects resistance to oxacillin and teicoplanin, as well as the synthesis of virulence factors. The polypeptide is Regulatory protein MsrR (msrR) (Staphylococcus aureus (strain NCTC 8325 / PS 47)).